Consider the following 470-residue polypeptide: Poly(A) polymerase catalytic subunit (470 aa).

Catalysis depends on residues Asp-192 and Asp-194.

This sequence belongs to the poxviridae poly(A) polymerase catalytic subunit family. As to quaternary structure, heterodimer of a large (catalytic) subunit and a small (regulatory) subunit.

The enzyme catalyses RNA(n) + ATP = RNA(n)-3'-adenine ribonucleotide + diphosphate. Its function is as follows. Polymerase that creates the 3'-poly(A) tail of mRNA's. The protein is Poly(A) polymerase catalytic subunit (PAPL) of Oryctolagus cuniculus (Rabbit).